The primary structure comprises 209 residues: Thymidylate kinase (209 aa).

11–18 serves as a coordination point for ATP; sequence GIEGAGKT.

The protein belongs to the thymidylate kinase family.

The enzyme catalyses dTMP + ATP = dTDP + ADP. Phosphorylation of dTMP to form dTDP in both de novo and salvage pathways of dTTP synthesis. This Pasteurella multocida (strain Pm70) protein is Thymidylate kinase (tmk).